The following is an 869-amino-acid chain: H(+)/Cl(-) exchange transporter 6 (869 aa).

Topologically, residues 1 to 80 are cytoplasmic; the sequence is MAGCRGSLCC…KKGRRYEAVK (80 aa). 2 helical membrane passes run 81 to 113 and 128 to 150; these read WMVV…FGVV and LSLL…LVLI. Residues 156 to 160 carry the Selectivity filter part_1 motif; sequence GSGIP. Ser157 contacts chloride. Positions 159-166 form an intramembrane region, helical; it reads IPEVKCYL. The next 2 membrane-spanning stretches (helical) occupy residues 176-194 and 200-217; these read RLRT…VAGG and EGPM…LPQF. The short motif at 198–202 is the Selectivity filter part_2 element; sequence EKEGP. 2 consecutive intramembrane regions (helical) follow at residues 241–253 and 257–265; these read FVSA…VAAA and PIGGTLFSL. The next 3 helical transmembrane spans lie at 277-294, 335-364, and 371-392; these read TWKV…LNFF, GFFV…YRMR, and KLVR…VFVA. N-linked (GlcNAc...) asparagine glycans are attached at residues Asn410, Asn422, and Asn432. 2 helical membrane passes run 462–481 and 487–511; these read PVTL…WTYG and GLFV…KSYI. The Selectivity filter part_3 signature appears at 487-491; that stretch reads GLFVP. Phe489 is a chloride binding site. The segment at residues 519–533 is an intramembrane region (helical); sequence GTFALIGAAAFLGGV. Residues 534–536 constitute an intramembrane region (note=Loop between two helices); that stretch reads VRM. The segment at residues 537–548 is an intramembrane region (helical); that stretch reads TISLTVILIEST. An intramembrane region (note=Loop between two helices) is located at residues 549–552; sequence NEIT. The helical transmembrane segment at 553-571 threads the bilayer; that stretch reads YGLPIMVTLMVAKWTGDFF. Residues 572 to 869 lie on the Cytoplasmic side of the membrane; that stretch reads NKGIYDIHVG…ARLRQHYQTI (298 aa). Position 576 (Tyr576) interacts with chloride. One can recognise a CBS 1 domain in the interval 605–662; the sequence is MEPNLTYVYPHTRIQSLVSILRTTVHHAFPVVTENRGNEKEFMKGNQLISNNIKFKKS. 630 to 632 lines the ATP pocket; that stretch reads HHA. The residue at position 773 (Ser773) is a Phosphoserine. In terms of domain architecture, CBS 2 spans 807–868; sequence MNPSPFTVSP…QARLRQHYQT (62 aa). 849–852 is a binding site for ATP; sequence TRHN.

The protein belongs to the chloride channel (TC 2.A.49) family. ClC-6/CLCN6 subfamily. In terms of processing, N-glycosylated on several asparagine residues. Testis, ovary, small intestine, brain and skeletal muscle. Low level expression in aortic and coronary vascular smooth muscle cells, and aortic endothelial cells. Isoform 3 is only detected in kidney.

It localises to the late endosome membrane. It carries out the reaction 2 chloride(in) + H(+)(out) = 2 chloride(out) + H(+)(in). Functionally, voltage-gated channel mediating the exchange of chloride ions against protons. Functions as antiporter and contributes to the acidification of the late endosome lumen. The CLC channel family contains both chloride channels and proton-coupled anion transporters that exchange chloride or another anion for protons. The presence of conserved gating glutamate residues is typical for family members that function as antiporters. The polypeptide is H(+)/Cl(-) exchange transporter 6 (Homo sapiens (Human)).